We begin with the raw amino-acid sequence, 162 residues long: Transcriptional repressor NrdR (162 aa).

A zinc finger spans residues Cys-3–Cys-34. The ATP-cone domain occupies Ile-49–Asp-139.

It belongs to the NrdR family. Zn(2+) is required as a cofactor.

In terms of biological role, negatively regulates transcription of bacterial ribonucleotide reductase nrd genes and operons by binding to NrdR-boxes. This Thermosynechococcus vestitus (strain NIES-2133 / IAM M-273 / BP-1) protein is Transcriptional repressor NrdR.